A 95-amino-acid polypeptide reads, in one-letter code: Large ribosomal subunit protein bL21 (95 aa).

The protein belongs to the bacterial ribosomal protein bL21 family. In terms of assembly, part of the 50S ribosomal subunit. Contacts protein L20.

This protein binds to 23S rRNA in the presence of protein L20. This chain is Large ribosomal subunit protein bL21, found in Chlorobaculum tepidum (strain ATCC 49652 / DSM 12025 / NBRC 103806 / TLS) (Chlorobium tepidum).